The sequence spans 445 residues: ATP-dependent protease ATPase subunit HslU (445 aa).

ATP is bound by residues isoleucine 17, 59-64 (GVGKTE), aspartate 254, glutamate 319, and arginine 391.

Belongs to the ClpX chaperone family. HslU subfamily. A double ring-shaped homohexamer of HslV is capped on each side by a ring-shaped HslU homohexamer. The assembly of the HslU/HslV complex is dependent on binding of ATP.

It localises to the cytoplasm. ATPase subunit of a proteasome-like degradation complex; this subunit has chaperone activity. The binding of ATP and its subsequent hydrolysis by HslU are essential for unfolding of protein substrates subsequently hydrolyzed by HslV. HslU recognizes the N-terminal part of its protein substrates and unfolds these before they are guided to HslV for hydrolysis. In Pseudomonas fluorescens (strain Pf0-1), this protein is ATP-dependent protease ATPase subunit HslU.